The sequence spans 396 residues: Phosphoglycerate kinase (396 aa).

Substrate contacts are provided by residues 21-23 (DFN), arginine 36, 59-62 (HLGR), arginine 118, and arginine 151. ATP-binding positions include lysine 201, glycine 292, glutamate 323, and 349 to 352 (GGDS).

The protein belongs to the phosphoglycerate kinase family. As to quaternary structure, monomer.

It is found in the cytoplasm. The enzyme catalyses (2R)-3-phosphoglycerate + ATP = (2R)-3-phospho-glyceroyl phosphate + ADP. It functions in the pathway carbohydrate degradation; glycolysis; pyruvate from D-glyceraldehyde 3-phosphate: step 2/5. The sequence is that of Phosphoglycerate kinase from Leptospira biflexa serovar Patoc (strain Patoc 1 / Ames).